The sequence spans 87 residues: Omega-lycotoxin-Am1c (87 aa).

A signal peptide spans 1–17 (MKLSIFFVLFFIAIAYC). The propeptide occupies 18–40 (QPEFLDDEEDEVEETLPVAEEGR). Cystine bridges form between Cys44–Cys59, Cys51–Cys64, Cys58–Cys84, and Cys66–Cys82.

The protein belongs to the neurotoxin omega-lctx family. Expressed by the venom gland.

Its subcellular location is the secreted. Modulates Cav2.1/CACNA1A voltage-gated calcium channels (P/Q-type currents) in rat cerebellar Purkinje cells and hippocampal CA1-CA3 neurons. At saturating concentrations (&gt;10 nM) decelerates activation kinetics and slightly increases peak amplitude without affecting deactivation kinetics. In vivo, does not cause death when intravenously injected into mice. In rat models, through its activity on Cav2.1/CACNA1A, has an ameliorative effect on memory defects provoked by hyperstimulation of N-methyl-D-aspartate receptors (NMDARs) in the hippocampus. This Alopecosa marikovskyi (Wolf spider) protein is Omega-lycotoxin-Am1c.